The primary structure comprises 295 residues: Small ribosomal subunit protein uS2 (295 aa).

This sequence belongs to the universal ribosomal protein uS2 family. As to quaternary structure, component of the small ribosomal subunit. Mature ribosomes consist of a small (40S) and a large (60S) subunit. The 40S subunit contains about 33 different proteins and 1 molecule of RNA (18S). The 60S subunit contains about 49 different proteins and 3 molecules of RNA (25S, 5.8S and 5S). Interacts with RPS21.

The protein localises to the cytoplasm. Its function is as follows. Required for the assembly and/or stability of the 40S ribosomal subunit. Required for the processing of the 20S rRNA-precursor to mature 18S rRNA in a late step of the maturation of 40S ribosomal subunits. The chain is Small ribosomal subunit protein uS2 from Paracoccidioides brasiliensis (strain Pb03).